Reading from the N-terminus, the 619-residue chain is UvrABC system protein C (619 aa).

In terms of domain architecture, GIY-YIG spans 20 to 98 (TAPGVYRMYA…IKSLSPRYNV (79 aa)). The UVR domain maps to 207-242 (DQLGEEIMHSMQQASEALEFERAARLRDLLSSLRSM).

The protein belongs to the UvrC family. In terms of assembly, interacts with UvrB in an incision complex.

Its subcellular location is the cytoplasm. The UvrABC repair system catalyzes the recognition and processing of DNA lesions. UvrC both incises the 5' and 3' sides of the lesion. The N-terminal half is responsible for the 3' incision and the C-terminal half is responsible for the 5' incision. The polypeptide is UvrABC system protein C (Xanthomonas euvesicatoria pv. vesicatoria (strain 85-10) (Xanthomonas campestris pv. vesicatoria)).